The chain runs to 2572 residues: Highly reducing polyketide synthase phiA (2572 aa).

A Ketosynthase family 3 (KS3) domain is found at 11 to 438 (IMPIAVVGMS…GANAHVIIES (428 aa)). Active-site for beta-ketoacyl synthase activity residues include Cys186, His321, and His361. The Malonyl-CoA:ACP transacylase (MAT) domain occupies 591–917 (FVFTGQGAQW…HTALARKKDA (327 aa)). An N-terminal hotdog fold region spans residues 983-1120 (VDLLGVLERN…GLISVQTPQK (138 aa)). A PKS/mFAS DH domain is found at 983-1307 (VDLLGVLERN…CATLERDGGG (325 aa)). His1015 serves as the catalytic Proton acceptor; for dehydratase activity. Residues 1150-1307 (RKEIDVSQFY…CATLERDGGG (158 aa)) form a C-terminal hotdog fold region. Residue Asp1215 is the Proton donor; for dehydratase activity of the active site. Residues 1353 to 1654 (LERAAFYYLH…LSSSTNKTNY (302 aa)) form a methyltransferase (CMeT) domain region. In terms of domain architecture, Enoyl reductase (ER) spans 1870 to 2182 (GLLDTLHFTE…TGGHMGKLVA (313 aa)). Positions 2206 to 2383 (ASYLLVGGLG…ATTLDLGAIS (178 aa)) constitute a Ketoreductase (KR) domain. Residues 2484–2561 (AASEAICDAL…GLAAKIAKRS (78 aa)) form the Carrier domain. Ser2521 carries the O-(pantetheine 4'-phosphoryl)serine modification.

Requires pantetheine 4'-phosphate as cofactor.

It functions in the pathway secondary metabolite biosynthesis. Its function is as follows. Highly reducing polyketide synthase; part of the gene cluster that mediates the biosynthesis of the antihypercholesterolemic agents phomoidrides which are dimeric anhydrides. The pathway begins with the highly reducing polyketide synthase phiA that catalyzes the formation of a C12-fatty acyl-ACP, starting from one acetate and 5 malonate units. The hydrolase phiM is involved in the release of the C12-fatty acyl chain from phiA. The alkylcitrate synthase (ACS) phiJ and the alkylcitrate dehydratase (ACDH) phiI then give rise to decarboxylated monomeric anhydrides by coupling the C12-fatty acyl chain with oxalacetic acid. The cyclase phiC is responsible for the dimerization of the monomeric anhydrides which leads to the production of prephomoidride that contains the characteristic bicyclo[4.3.1]deca-1,6-diene system of phomoidrides. Iterative oxidation catalyzed by the alpha-ketoglutarate-dependent dioxygenase phiK produced then phomoidride A. Finally, the methyltransferase phiE converts phomoidride A to phomoidride B via an acetalization reaction. The phosphatidylethanolamine-binding protein phiB and phiN are not essential for dimerization and their functions have still to be determined. This is Highly reducing polyketide synthase phiA from Fungal sp. (strain ATCC 74256).